Here is a 33-residue protein sequence, read N- to C-terminus: Trypsin inhibitor 1 (33 aa).

Intrachain disulfides connect C1–C17, C8–C21, and C16–C32.

In terms of tissue distribution, expressed in leaves and fruit flesh (at protein level).

In terms of biological role, inhibits trypsin (IC(50)=471 nM). The protein is Trypsin inhibitor 1 of Beta vulgaris subsp. vulgaris (Beet).